We begin with the raw amino-acid sequence, 238 residues long: MPEHHQYQFEFMGLLFNGTTMITTTIAMAIVVIITVIGCRKLAMRPTGLQNFIEWVVDFCRGIIKANMDWKVGGRFIVLAYALLFYVFVANMMGIPFELVTKEGHNVFWKSPTSDPVLTLTMAVFIVVLTHIYGIMVTGPSTYGKSWFTPKWFLFPFKVIEEGSNALTLGMRLFGNIYAKEILMLLLVSLGTTAVYWGIFAFVPLIVWQAFSIFIGSLQAYIFAMLAMVYMSHKVEQH.

5 helical membrane-spanning segments follow: residues 18–38 (GTTMITTTIAMAIVVIITVIG), 76–96 (FIVLAYALLFYVFVANMMGIP), 117–137 (VLTLTMAVFIVVLTHIYGIMV), 173–193 (LFGNIYAKEILMLLLVSLGTT), and 208–230 (WQAFSIFIGSLQAYIFAMLAMVY).

It belongs to the ATPase A chain family. F-type ATPases have 2 components, CF(1) - the catalytic core - and CF(0) - the membrane proton channel. CF(1) has five subunits: alpha(3), beta(3), gamma(1), delta(1), epsilon(1). CF(0) has three main subunits: a(1), b(2) and c(9-12). The alpha and beta chains form an alternating ring which encloses part of the gamma chain. CF(1) is attached to CF(0) by a central stalk formed by the gamma and epsilon chains, while a peripheral stalk is formed by the delta and b chains.

Its subcellular location is the cell membrane. Functionally, key component of the proton channel; it plays a direct role in the translocation of protons across the membrane. The chain is ATP synthase subunit a from Shouchella clausii (strain KSM-K16) (Alkalihalobacillus clausii).